The chain runs to 131 residues: Histone H2A type 1-A (131 aa).

The tract at residues methionine 1 to glycine 23 is disordered. Residue serine 2 is modified to N-acetylserine. Serine 2 is modified (phosphoserine; by RPS6KA5). The residue at position 4 (arginine 4) is a Citrulline; alternate. Arginine 4 is modified (symmetric dimethylarginine; by PRMT5; alternate). Residue lysine 6 is modified to N6-(2-hydroxyisobutyryl)lysine. Basic residues predominate over residues glutamine 7–serine 19. Lysine 10 carries the N6-(2-hydroxyisobutyryl)lysine; alternate modification. N6-(beta-hydroxybutyryl)lysine; alternate is present on lysine 10. Lysine 10 carries the N6-lactoyllysine; alternate modification. N6-succinyllysine; alternate is present on lysine 10. Lysine 14 is modified (N6-(beta-hydroxybutyryl)lysine). Glycyl lysine isopeptide (Lys-Gly) (interchain with G-Cter in ubiquitin) cross-links involve residues lysine 14 and lysine 16. Lysine 37 bears the N6-(2-hydroxyisobutyryl)lysine; alternate mark. Lysine 37 carries the N6-(beta-hydroxybutyryl)lysine; alternate modification. At lysine 37 the chain carries N6-crotonyllysine; alternate. N6-(2-hydroxyisobutyryl)lysine is present on residues lysine 75 and lysine 76. Residue lysine 96 is modified to N6-(2-hydroxyisobutyryl)lysine; alternate. Lysine 96 is subject to N6-(beta-hydroxybutyryl)lysine; alternate. Position 96 is an N6-succinyllysine; alternate (lysine 96). Position 96 is an N6-glutaryllysine; alternate (lysine 96). Residue glutamine 105 is modified to N5-methylglutamine. Residue lysine 119 is modified to N6-(2-hydroxyisobutyryl)lysine; alternate. An N6-(beta-hydroxybutyryl)lysine; alternate modification is found at lysine 119. Lysine 119 and lysine 120 each carry N6-crotonyllysine; alternate. An N6-glutaryllysine; alternate mark is found at lysine 119 and lysine 120. A Glycyl lysine isopeptide (Lys-Gly) (interchain with G-Cter in ubiquitin); alternate cross-link involves residue lysine 120. At threonine 121 the chain carries Phosphothreonine; by DCAF1. An N6-crotonyllysine modification is found at lysine 127.

It belongs to the histone H2A family. As to quaternary structure, the nucleosome is a histone octamer containing two molecules each of H2A, H2B, H3 and H4 assembled in one H3-H4 heterotetramer and two H2A-H2B heterodimers. The octamer wraps approximately 147 bp of DNA. Post-translationally, deiminated on Arg-4 in granulocytes upon calcium entry. In terms of processing, monoubiquitination of Lys-120 (H2AK119Ub) by RING1, TRIM37 and RNF2/RING2 complex gives a specific tag for epigenetic transcriptional repression and participates in X chromosome inactivation of female mammals. It is involved in the initiation of both imprinted and random X inactivation. Ubiquitinated H2A is enriched in inactive X chromosome chromatin. Ubiquitination of H2A functions downstream of methylation of 'Lys-27' of histone H3 (H3K27me). H2AK119Ub by RNF2/RING2 can also be induced by ultraviolet and may be involved in DNA repair. Monoubiquitination of Lys-120 (H2AK119Ub) by TRIM37 may promote transformation of cells in a number of breast cancers. Following DNA double-strand breaks (DSBs), it is ubiquitinated through 'Lys-63' linkage of ubiquitin moieties by the E2 ligase UBE2N and the E3 ligases RNF8 and RNF168, leading to the recruitment of repair proteins to sites of DNA damage. Ubiquitination at Lys-14 and Lys-16 (H2AK13Ub and H2AK15Ub, respectively) in response to DNA damage is initiated by RNF168 that mediates monoubiquitination at these 2 sites, and 'Lys-63'-linked ubiquitin are then conjugated to monoubiquitin; RNF8 is able to extend 'Lys-63'-linked ubiquitin chains in vitro. Deubiquitinated by USP51 at Lys-14 and Lys-16 (H2AK13Ub and H2AK15Ub, respectively) after damaged DNA is repaired. H2AK119Ub and ionizing radiation-induced 'Lys-63'-linked ubiquitination (H2AK13Ub and H2AK15Ub) are distinct events. Phosphorylation on Ser-2 (H2AS1ph) is enhanced during mitosis. Phosphorylation on Ser-2 by RPS6KA5/MSK1 directly represses transcription. Acetylation of H3 inhibits Ser-2 phosphorylation by RPS6KA5/MSK1. Phosphorylation at Thr-121 (H2AT120ph) by DCAF1 is present in the regulatory region of many tumor suppresor genes and down-regulates their transcription. Post-translationally, glutamine methylation at Gln-105 (H2AQ104me) by FBL is specifically dedicated to polymerase I. It is present at 35S ribosomal DNA locus and impairs binding of the FACT complex. In terms of processing, symmetric dimethylation on Arg-4 by the PRDM1/PRMT5 complex may play a crucial role in the germ-cell lineage. Crotonylation (Kcr) is specifically present in male germ cells and marks testis-specific genes in post-meiotic cells, including X-linked genes that escape sex chromosome inactivation in haploid cells. Crotonylation marks active promoters and enhancers and confers resistance to transcriptional repressors. It is also associated with post-meiotically activated genes on autosomes. Post-translationally, lactylated in macrophages by EP300/P300 by using lactoyl-CoA directly derived from endogenous or exogenous lactate, leading to stimulates gene transcription.

It is found in the nucleus. It localises to the chromosome. Functionally, core component of nucleosome. Nucleosomes wrap and compact DNA into chromatin, limiting DNA accessibility to the cellular machineries which require DNA as a template. Histones thereby play a central role in transcription regulation, DNA repair, DNA replication and chromosomal stability. DNA accessibility is regulated via a complex set of post-translational modifications of histones, also called histone code, and nucleosome remodeling. In Homo sapiens (Human), this protein is Histone H2A type 1-A.